Consider the following 530-residue polypeptide: Ubiquitin carboxyl-terminal hydrolase 17-like protein 12 (530 aa).

One can recognise a USP domain in the interval 80 to 375 (AGLQNMGNTC…QAYVLFYIQK (296 aa)). The active-site Nucleophile is C89. H334 acts as the Proton acceptor in catalysis. Composition is skewed to basic and acidic residues over residues 382–392 (SESVSRGREPR) and 398–412 (DTDR…KRDH). Disordered stretches follow at residues 382–412 (SESV…KRDH) and 477–530 (NHHP…LVCQ). Over residues 484–495 (SSLLKLSSTTPT) the composition is skewed to low complexity. Over residues 496 to 505 (HQESMNTGTL) the composition is skewed to polar residues. A compositionally biased stretch (basic residues) spans 510–524 (GRARRSKGKNKHSKR).

This sequence belongs to the peptidase C19 family. USP17 subfamily.

The protein resides in the nucleus. Its subcellular location is the endoplasmic reticulum. It catalyses the reaction Thiol-dependent hydrolysis of ester, thioester, amide, peptide and isopeptide bonds formed by the C-terminal Gly of ubiquitin (a 76-residue protein attached to proteins as an intracellular targeting signal).. Functionally, deubiquitinating enzyme that removes conjugated ubiquitin from specific proteins to regulate different cellular processes that may include cell proliferation, progression through the cell cycle, apoptosis, cell migration, and the cellular response to viral infection. This is Ubiquitin carboxyl-terminal hydrolase 17-like protein 12 (USP17L12) from Homo sapiens (Human).